A 93-amino-acid chain; its full sequence is MTKSELIESLASKNPSLPIKMVEHCVKELLEQLTATLEEGERIEVRGFGSFSLHYRQPRLGRNPKTGESVLLGAKYVPHFKAGKDLKERVDLL.

This sequence belongs to the bacterial histone-like protein family. Heterodimer of an alpha and a beta chain.

Functionally, this protein is one of the two subunits of integration host factor, a specific DNA-binding protein that functions in genetic recombination as well as in transcriptional and translational control. This is Integration host factor subunit beta (ihfB) from Mannheimia haemolytica (Pasteurella haemolytica).